Reading from the N-terminus, the 148-residue chain is UPF0178 protein LPC_0108 (148 aa).

It belongs to the UPF0178 family.

The chain is UPF0178 protein LPC_0108 from Legionella pneumophila (strain Corby).